The primary structure comprises 181 residues: Inner membrane-spanning protein YciB (181 aa).

5 consecutive transmembrane segments (helical) span residues 3-23 (LLFD…FGIY), 54-74 (SLAI…PWFI), 81-101 (IYWL…KPLI), 119-139 (LNLA…YVAY), and 149-169 (FKLF…AFYL).

It belongs to the YciB family.

The protein resides in the cell inner membrane. Functionally, plays a role in cell envelope biogenesis, maintenance of cell envelope integrity and membrane homeostasis. This chain is Inner membrane-spanning protein YciB, found in Legionella pneumophila subsp. pneumophila (strain Philadelphia 1 / ATCC 33152 / DSM 7513).